The primary structure comprises 71 residues: Dermonecrotic toxin LgSicTox-alphaI-Loxn-A (71 aa).

H12 is a catalytic residue. Positions 32, 34, and 48 each coordinate Mg(2+).

The cofactor is Mg(2+). Contains 2 disulfide bonds. Expressed by the venom gland.

It localises to the secreted. The catalysed reaction is an N-(acyl)-sphingosylphosphocholine = an N-(acyl)-sphingosyl-1,3-cyclic phosphate + choline. It carries out the reaction an N-(acyl)-sphingosylphosphoethanolamine = an N-(acyl)-sphingosyl-1,3-cyclic phosphate + ethanolamine. It catalyses the reaction a 1-acyl-sn-glycero-3-phosphocholine = a 1-acyl-sn-glycero-2,3-cyclic phosphate + choline. The enzyme catalyses a 1-acyl-sn-glycero-3-phosphoethanolamine = a 1-acyl-sn-glycero-2,3-cyclic phosphate + ethanolamine. Catalyzes the hydrolysis of sphingomyelin. May also act on other phosphatidyl esters. In terms of biological role, dermonecrotic toxins cleave the phosphodiester linkage between the phosphate and headgroup of certain phospholipids (sphingolipid and lysolipid substrates), forming an alcohol (often choline) and a cyclic phosphate. This toxin acts on sphingomyelin (SM). It may also act on ceramide phosphoethanolamine (CPE), lysophosphatidylcholine (LPC) and lysophosphatidylethanolamine (LPE), but not on lysophosphatidylserine (LPS), and lysophosphatidylglycerol (LPG). It acts by transphosphatidylation, releasing exclusively cyclic phosphate products as second products. In vivo, induces dermonecrosis, but is not lethal. Induces hemolysis, vascular permeability, edema, inflammatory response, and platelet aggregation. The chain is Dermonecrotic toxin LgSicTox-alphaI-Loxn-A from Loxosceles gaucho (Spider).